The following is a 174-amino-acid chain: Ubiquitin-like protein 4B (174 aa).

Residues 1–76 (MFLTVKLLLG…INVIMQPLEK (76 aa)) form the Ubiquitin-like domain. Residues 141–156 (EPHVEPAGERELEAKA) are compositionally biased toward basic and acidic residues. Residues 141 to 174 (EPHVEPAGERELEAKARPQSSCDMEEKEEAAADQ) are disordered. The segment covering 163 to 174 (DMEEKEEAAADQ) has biased composition (acidic residues).

It is found in the cytoplasm. The chain is Ubiquitin-like protein 4B (UBL4B) from Homo sapiens (Human).